A 149-amino-acid chain; its full sequence is Protein FAM72B (149 aa).

This sequence belongs to the FAM72 family.

This chain is Protein FAM72B (FAM72B), found in Homo sapiens (Human).